We begin with the raw amino-acid sequence, 179 residues long: ATP synthase subunit delta (179 aa).

It belongs to the ATPase delta chain family. As to quaternary structure, F-type ATPases have 2 components, F(1) - the catalytic core - and F(0) - the membrane proton channel. F(1) has five subunits: alpha(3), beta(3), gamma(1), delta(1), epsilon(1). F(0) has three main subunits: a(1), b(2) and c(10-14). The alpha and beta chains form an alternating ring which encloses part of the gamma chain. F(1) is attached to F(0) by a central stalk formed by the gamma and epsilon chains, while a peripheral stalk is formed by the delta and b chains.

Its subcellular location is the cell inner membrane. F(1)F(0) ATP synthase produces ATP from ADP in the presence of a proton or sodium gradient. F-type ATPases consist of two structural domains, F(1) containing the extramembraneous catalytic core and F(0) containing the membrane proton channel, linked together by a central stalk and a peripheral stalk. During catalysis, ATP synthesis in the catalytic domain of F(1) is coupled via a rotary mechanism of the central stalk subunits to proton translocation. Its function is as follows. This protein is part of the stalk that links CF(0) to CF(1). It either transmits conformational changes from CF(0) to CF(1) or is implicated in proton conduction. This chain is ATP synthase subunit delta, found in Acidithiobacillus ferrooxidans (strain ATCC 23270 / DSM 14882 / CIP 104768 / NCIMB 8455) (Ferrobacillus ferrooxidans (strain ATCC 23270)).